A 1113-amino-acid polypeptide reads, in one-letter code: Nucleoporin NUP116/NSP116 (1113 aa).

Residues 1-35 (MFGVSRGAFPSATTQPFGSTGSTFGGQQQQQQPVA) are disordered. FG repeat units lie at residues 2–3 (FG), 17–18 (FG), 24–25 (FG), and 40–41 (FG). The segment covering 13 to 33 (TTQPFGSTGSTFGGQQQQQQP) has biased composition (low complexity). The interval 49 to 91 (TQAPAFGNFGNQTSNSPFGMSGSTTANGTPFGQSQLTNNNASG) is disordered. The GLFG 1; approximate repeat unit spans residues 55 to 58 (GNFG). FG repeat units lie at residues 66–67 (FG), 79–80 (FG), and 94–95 (FG). The interval 92 to 172 (SIFGGMGNNT…AGRKFGTSQN (81 aa)) is interaction with AFG2. Residues 110-166 (VVPNSTAGTSIKPFTTFEEKDPTTGVINVFQSITCMPEYRNFSFEELRFQDYQAGRK) form a GLE2 binding sequence (GLEBS) region. Positions 160–362 (DYQAGRKFGT…AKPASGGLFG (203 aa)) are interaction with MEX67, not KAP95. FG repeat units follow at residues 167-168 (FG) and 189-190 (FG). A GLFG 2 repeat occupies 205–208 (GLFG). Residues 214 to 217 (GMFG) form a GLFG 3; approximate repeat. One copy of the GLFG 4; approximate repeat lies at 224-227 (GGFG). The stretch at 235–238 (GLFG) is one GLFG 5 repeat. Residues 249–250 (FG) form an FG 10 repeat. GLFG repeat units follow at residues 259–262 (GLFG), 276–279 (GLFG), and 288–291 (GLFG). Residues 265–279 (TNNPTNGTNNTGLFG) show a composition bias toward low complexity. The interval 265–341 (TNNPTNGTNN…SNANANGGAF (77 aa)) is disordered. Polar residues predominate over residues 280-304 (QQNSNTNGGLFGQQQNSFGANNVSN). One copy of the FG 11 repeat lies at 297-298 (FG). One copy of the GLFG 9; approximate repeat lies at 306 to 309 (GAFG). One copy of the GLFG 10; approximate repeat lies at 327 to 330 (GIFG). The segment covering 330–341 (GQSNANANGGAF) has biased composition (low complexity). A GLFG 11; approximate repeat occupies 339–342 (GAFG). An FG 12 repeat occupies 351 to 352 (FG). The stretch at 359-362 (GLFG) is one GLFG 12 repeat. The segment at 362–535 (GQSAGSKAFG…GAKPTGFGNT (174 aa)) is sufficient for interaction with MEX67 and KAP95. One copy of the FG 13 repeat lies at 370-371 (FG). Positions 371 to 606 (GMNTNPTGTT…NPASTSGGLF (236 aa)) are disordered. GLFG repeat units follow at residues 382–385 (GLFG), 395–398 (GLFG), 407–410 (GLFG), and 420–423 (GLFG). Residues 410–438 (GQNNQSQNQSGLFGQQNSSNAFGQPQQQG) are compositionally biased toward low complexity. Residues 431-432 (FG) form an FG 14 repeat. GLFG repeat units lie at residues 439-442 (GLFG) and 448-451 (GLFG). Polar residues predominate over residues 451-464 (GQQQGASTFASGNA). 2 stretches are compositionally biased toward low complexity: residues 465–478 (QNNS…QQQQ) and 485–522 (GQQN…QQNN). One copy of the FG 15 repeat lies at 470–471 (FG). GLFG repeat units follow at residues 482–485 (GLFG) and 497–500 (GLFG). FG repeat units follow at residues 510 to 511 (FG), 525 to 526 (FG), and 532 to 533 (FG). Residues 532 to 569 (FGNTSLFSNSTTNQSNGISGNNLQQQSGGLFQNKQQPA) show a composition bias toward polar residues. The tract at residues 536-732 (SLFSNSTTNQ…QSQNALQQQQ (197 aa)) is interaction with KAP95, not MEX67. GLFG repeat units follow at residues 572–575 (GLFG), 585–588 (GLFG), and 604–607 (GLFG). A compositionally biased stretch (polar residues) spans 588–603 (GNNQVANQNNPASTSG). The FG 19 repeat unit spans residues 616–617 (FG). A GLFG 24; approximate repeat occupies 630–633 (GIFG). GLFG repeat units follow at residues 648–651 (GLFG), 665–668 (GLFG), and 683–686 (GLFG). A compositionally biased stretch (low complexity) spans 678–691 (SNGSTGLFGSNNTS). 2 disordered regions span residues 678-736 (SNGS…QQQR) and 868-939 (SEEK…ENVA). Residues 692–708 (QSTNAGGLFQNNTSTNT) show a composition bias toward polar residues. The span at 719–736 (QSMAQSQNALQQQQQQQR) shows a compositional bias: low complexity. S886 carries the phosphoserine modification. The segment covering 916-939 (NDGEDSATKHHSRNMDEENKENVA) has biased composition (basic and acidic residues). One can recognise a Peptidase S59 domain in the interval 967 to 1109 (NENYYISPSL…GTYVFIVNHA (143 aa)). Residues 967 to 1113 (NENYYISPSL…FIVNHAAEQT (147 aa)) are interaction with NUP82 NPC subcomplex. Residues 969 to 1108 (NYYISPSLDT…SGTYVFIVNH (140 aa)) are nucleoporin RNA-binding motif (NRM).

It belongs to the nucleoporin GLFG family. In terms of assembly, component of the nuclear pore complex (NPC). NPC constitutes the exclusive means of nucleocytoplasmic transport. NPCs allow the passive diffusion of ions and small molecules and the active, nuclear transport receptor-mediated bidirectional transport of macromolecules such as proteins, RNAs, ribonucleoparticles (RNPs), and ribosomal subunits across the nuclear envelope. Due to its 8-fold rotational symmetry, all subunits are present with 8 copies or multiples thereof. NUP116 interacts with the NUP82 subcomplex and GLE2. Through its FG repeats it interacts with numerous karyopherins including KAP95, PSE1 (GSP1-GDP dependent), MEX67, and to homomeric RNA. Interacts with CEX1. Interacts (via N-terminus) with AFG2 (via N-terminus).

It localises to the nucleus. It is found in the nuclear pore complex. The protein localises to the nucleus membrane. Functionally, functions as a component of the nuclear pore complex (NPC). NPC components, collectively referred to as nucleoporins (NUPs), can play the role of both NPC structural components and of docking or interaction partners for transiently associated nuclear transport factors. Active directional transport is assured by both, a Phe-Gly (FG) repeat affinity gradient for these transport factors across the NPC and a transport cofactor concentration gradient across the nuclear envelope (GSP1 and GSP2 GTPases associated predominantly with GTP in the nucleus, with GDP in the cytoplasm). Plays an important role in several nuclear export and import pathways including poly(A)+ RNA, tRNA, pre-ribosome, and protein transport. By binding ATPase AFG2, promotes AFG2-mediated release of shuttling protein RLP24 from pre-60S ribosomal particles. The polypeptide is Nucleoporin NUP116/NSP116 (NUP116) (Saccharomyces cerevisiae (strain ATCC 204508 / S288c) (Baker's yeast)).